A 324-amino-acid polypeptide reads, in one-letter code: NADH-ubiquinone oxidoreductase chain 1 (324 aa).

8 helical membrane passes run 3 to 23 (FILSLIGSLLLIICVLVSVAF), 77 to 97 (ISPIFSLFLSLFVWMCMPFFV), 104 to 124 (LGGLFFLCCTSLGVYTVMVAG), 150 to 170 (LALIMLSFIFLIGSYNMIYFF), 174 to 194 (IYMWFLIILFPMSLVWLTISL), 226 to 246 (LIFMAEYASILFMSMLFCVIF), 250 to 270 (DVFNLLFYVKLTFISFVFIWA), and 297 to 317 (YLLFFIGFKILLFSFLLWIFF).

It belongs to the complex I subunit 1 family.

It is found in the mitochondrion inner membrane. It carries out the reaction a ubiquinone + NADH + 5 H(+)(in) = a ubiquinol + NAD(+) + 4 H(+)(out). Core subunit of the mitochondrial membrane respiratory chain NADH dehydrogenase (Complex I) that is believed to belong to the minimal assembly required for catalysis. Complex I functions in the transfer of electrons from NADH to the respiratory chain. The immediate electron acceptor for the enzyme is believed to be ubiquinone. This is NADH-ubiquinone oxidoreductase chain 1 (mt:ND1) from Drosophila yakuba (Fruit fly).